Reading from the N-terminus, the 1323-residue chain is PH domain leucine-rich repeat-containing protein phosphatase 2 (1323 aa).

Positions 150-248 (RILLSGIYNV…WQRQASKVVS (99 aa)) constitute a PH domain. 22 LRR repeats span residues 250-271 (RISTVDLSCYSLEEVPEHLFYS), 273-296 (DITYLNLRHNFMQLERPGGLDTLY), 300-321 (QLKGLNLSHNKLGLFPILLCEI), 323-344 (TLTELNLSCNGFHDLPSQIGNL), 346-368 (NLQTLCLDGNFLTTLPEELGNLQ), 369-390 (QLSSLGISFNNFSQIPEVYEKL), 392-412 (MLDRVVMAGNCLEVLNLGVLN), 416-439 (HIKHVDLRMNHLKTMVIENLEGNK), 440-460 (HITHVDLRDNRLTDLDLSSLC), 461-480 (SLEQLHCGRNQLRELTLSGF), 481-502 (SLRTLYASSNRLTAVNVYPVPS), 503-524 (LLTFLDLSRNLLECVPDWACEA), 526-547 (KIEVLDVSYNLLTEVPVRILSS), 549-570 (SLRKLMLGHNHVQNLPTLVEHI), 571-592 (PLEVLDLQHNALTRLPDTLFSK), 595-616 (NLRYLNASANSLESLPSACTGE), 621-644 (MLQLLYLTNNLLTDQCIPVLVGHL), 645-666 (HLRILHLANNQLQTFPASKLNK), 669-690 (QLEELNLSGNKLKTIPTTIANC), 692-713 (RLHTLVAHSNNISIFPEILQLP), 714-735 (QIQFVDLSCNDLTEILIPEALP), and 737-758 (TLQDLDLTGNTNLVLEHKTLDI). One can recognise a PPM-type phosphatase domain in the interval 785–1033 (SHGLAEMAGQ…DNVGAMVVYL (249 aa)). Residues Asp820, Gly821, Lys985, and Asp1024 each coordinate Mn(2+). The interval 1060–1157 (TIKDAPKPAT…DSDDDQPVEG (98 aa)) is disordered. Residues 1071–1097 (SSSSGIASEFSSEMSTSEVSSEVGSTA) are compositionally biased toward low complexity. Residues 1122–1146 (PTPTSGLFQRQPSSATFSSNQSDNG) show a composition bias toward polar residues. Ser1210 bears the Phosphoserine mark. Residues 1285–1323 (HDLEEEVKEQMKQHQDSRLEPEPHEEDRTEPPEEFDTAL) are disordered. Residues 1292–1315 (KEQMKQHQDSRLEPEPHEEDRTEP) are compositionally biased toward basic and acidic residues.

Interacts with AKT1, AKT3 and PRKCB isoform beta-II. Interacts with STK4, RPS6KB1, RAF1. Interacts with FKBP5; FKBP5 acts as a scaffold for PHLPP2 and Akt. Interacts with NHERF1; NHERF1 scaffolds a heterotrimeric complex with PTEN. Mn(2+) is required as a cofactor. In colorectal cancer tissue, expression is highest in the surface epithelium of normal colonic mucosa adjacent to the cancer tissue but is largely excluded from the crypt bases. Expression is lost or significantly decreased in 80% of tested tumors (at protein level).

It is found in the cytoplasm. The protein resides in the membrane. The protein localises to the nucleus. It carries out the reaction O-phospho-L-seryl-[protein] + H2O = L-seryl-[protein] + phosphate. It catalyses the reaction O-phospho-L-threonyl-[protein] + H2O = L-threonyl-[protein] + phosphate. Inhibited by AKT1, AKT2 and AKT3. Activated by oleic acid and arachidonic acid. Its function is as follows. Protein phosphatase involved in regulation of Akt and PKC signaling. Mediates dephosphorylation in the C-terminal domain hydrophobic motif of members of the AGC Ser/Thr protein kinase family; specifically acts on 'Ser-473' of AKT1, 'Ser-660' of PRKCB isoform beta-II and 'Ser-657' of PRKCA. Akt regulates the balance between cell survival and apoptosis through a cascade that primarily alters the function of transcription factors that regulate pro- and antiapoptotic genes. Dephosphorylation of 'Ser-473' of Akt triggers apoptosis and decreases cell proliferation. Also controls the phosphorylation of AKT3. Dephosphorylates STK4 on 'Thr-387' leading to STK4 activation and apoptosis. Dephosphorylates RPS6KB1 and is involved in regulation of cap-dependent translation. Inhibits cancer cell proliferation and may act as a tumor suppressor. Dephosphorylation of PRKCA and PRKCB leads to their destabilization and degradation. Dephosphorylates RAF1 inhibiting its kinase activity. In Homo sapiens (Human), this protein is PH domain leucine-rich repeat-containing protein phosphatase 2 (PHLPP2).